We begin with the raw amino-acid sequence, 259 residues long: Small ribosomal subunit protein uS2 (259 aa).

The segment at 232–259 is disordered; it reads KAMEAEETKAAEKAVETEAKEETPQEAK.

This sequence belongs to the universal ribosomal protein uS2 family.

This Maridesulfovibrio salexigens (strain ATCC 14822 / DSM 2638 / NCIMB 8403 / VKM B-1763) (Desulfovibrio salexigens) protein is Small ribosomal subunit protein uS2.